The chain runs to 226 residues: 3-dehydroquinate dehydratase (226 aa).

3-dehydroquinate contacts are provided by residues glutamate 33–arginine 35 and arginine 65. Catalysis depends on histidine 120, which acts as the Proton donor/acceptor. Lysine 147 functions as the Schiff-base intermediate with substrate in the catalytic mechanism. 3-dehydroquinate is bound by residues arginine 186, serine 205, and glutamine 209.

The protein belongs to the type-I 3-dehydroquinase family. In terms of assembly, homodimer.

It carries out the reaction 3-dehydroquinate = 3-dehydroshikimate + H2O. The protein operates within metabolic intermediate biosynthesis; chorismate biosynthesis; chorismate from D-erythrose 4-phosphate and phosphoenolpyruvate: step 3/7. Functionally, involved in the third step of the chorismate pathway, which leads to the biosynthesis of aromatic amino acids. Catalyzes the cis-dehydration of 3-dehydroquinate (DHQ) and introduces the first double bond of the aromatic ring to yield 3-dehydroshikimate. This Thermodesulfovibrio yellowstonii (strain ATCC 51303 / DSM 11347 / YP87) protein is 3-dehydroquinate dehydratase.